The chain runs to 709 residues: Phosphomethylpyrimidine synthase (709 aa).

Residues 1-13 (MNIRSNPDTTLPA) show a composition bias toward polar residues. Disordered regions lie at residues 1 to 21 (MNIR…PLPS) and 125 to 168 (DAPA…GREQ). Substrate is bound by residues Asn-274, Met-303, Tyr-332, His-368, 388-390 (SRG), 429-432 (DGLR), and Glu-468. His-472 is a binding site for Zn(2+). Residue Tyr-495 participates in substrate binding. Position 536 (His-536) interacts with Zn(2+). Residues Cys-616, Cys-619, and Cys-624 each contribute to the [4Fe-4S] cluster site.

It belongs to the ThiC family. As to quaternary structure, homodimer. Requires [4Fe-4S] cluster as cofactor.

It catalyses the reaction 5-amino-1-(5-phospho-beta-D-ribosyl)imidazole + S-adenosyl-L-methionine = 4-amino-2-methyl-5-(phosphooxymethyl)pyrimidine + CO + 5'-deoxyadenosine + formate + L-methionine + 3 H(+). It functions in the pathway cofactor biosynthesis; thiamine diphosphate biosynthesis. Catalyzes the synthesis of the hydroxymethylpyrimidine phosphate (HMP-P) moiety of thiamine from aminoimidazole ribotide (AIR) in a radical S-adenosyl-L-methionine (SAM)-dependent reaction. This is Phosphomethylpyrimidine synthase from Rhodopseudomonas palustris (strain BisB18).